The sequence spans 1008 residues: Pheromone-regulated membrane protein 10 (1008 aa).

3 disordered regions span residues 1–273, 342–384, and 477–506; these read MSQS…TFLG, KLPE…FYTP, and KNDFKNGPKRMANKIPGRKHGAQKQDTQDE. Positions 70 to 85 are enriched in low complexity; it reads DTIISNASTTNNSSSD. Residues 95–111 show a composition bias toward polar residues; the sequence is GENSNLPNFNFSANQVH. Composition is skewed to acidic residues over residues 116–132 and 143–161; these read ANEDDANDDSGEEEDTF and GSDEDMEADNEGDNVEDKE. A compositionally biased stretch (basic and acidic residues) spans 162 to 186; the sequence is EVVNEKEEIADDLHSKSSKTSRESK. Polar residues predominate over residues 188-204; the sequence is FNAGTKNSRRSLNSLQR. Residues 205 to 214 show a composition bias toward basic and acidic residues; that stretch reads NETDVTDQLK. Residues 215–225 show a composition bias toward low complexity; it reads RTTSTTSSSKR. Basic and acidic residues predominate over residues 226-239; the sequence is SNSDKRTGFKDILR. Over residues 346-364 the composition is skewed to polar residues; the sequence is GTSSDQQLDYSDTSASNLI. Basic residues predominate over residues 483–498; that stretch reads GPKRMANKIPGRKHGA. Transmembrane regions (helical) follow at residues 683-703, 707-727, 736-756, 762-782, 800-820, 838-858, 866-886, 892-912, 917-937, and 978-998; these read SPWLCVFLYGLGSSMVCPFAF, WYDVPIAFGVGLCVGYLQFFV, SVFEVTASIVVTFIARAIGSI, FCFSAIAQGSLALILPGYIIL, MFYAIIYSLFLGFGITLGASL, IKQDEFKILFVPLFSACLGLI, LPIMIVIACAGYVGTFFAGKH, VTEFTACIGAFIVGILGNLYS, GMAVAAMLPAIFVQVPSGIAS, and VKVSIGISVGLFASALFVYPF.

It belongs to the ThrE exporter (TC 2.A.79) family.

Its subcellular location is the membrane. This Debaryomyces hansenii (strain ATCC 36239 / CBS 767 / BCRC 21394 / JCM 1990 / NBRC 0083 / IGC 2968) (Yeast) protein is Pheromone-regulated membrane protein 10.